The chain runs to 848 residues: Heat shock protein 70 homolog lhs1 (848 aa).

The signal sequence occupies residues 1–21 (MKRSVLTIILFFSCQFWHAFA). 11 N-linked (GlcNAc...) asparagine glycosylation sites follow: N134, N247, N359, N457, N462, N488, N555, N632, N678, N733, and N817. The disordered stretch occupies residues 784–848 (KLKAKKGASS…QQEIDDSDEL (65 aa)). Composition is skewed to polar residues over residues 807 to 822 (TNDI…TSTQ) and 829 to 840 (ASVTQRPSSLQQ). Positions 845-848 (SDEL) match the Prevents secretion from ER motif.

Belongs to the heat shock protein 70 family.

The protein resides in the endoplasmic reticulum lumen. The enzyme catalyses ATP + H2O = ADP + phosphate + H(+). In terms of biological role, chaperone required for protein translocation and folding in the endoplasmic reticulum. In Schizosaccharomyces pombe (strain 972 / ATCC 24843) (Fission yeast), this protein is Heat shock protein 70 homolog lhs1.